A 260-amino-acid chain; its full sequence is Ribonuclease HII (260 aa).

Residues 75–260 form the RNase H type-2 domain; it reads ELIAGVDEVG…FEPIKSIIKK (186 aa). The a divalent metal cation site is built by D81, E82, and D173.

It belongs to the RNase HII family. The cofactor is Mn(2+). Mg(2+) is required as a cofactor.

It localises to the cytoplasm. The catalysed reaction is Endonucleolytic cleavage to 5'-phosphomonoester.. Its function is as follows. Endonuclease that specifically degrades the RNA of RNA-DNA hybrids. The polypeptide is Ribonuclease HII (Streptococcus thermophilus (strain CNRZ 1066)).